We begin with the raw amino-acid sequence, 395 residues long: Beta-1,4-galactosyltransferase 3 (395 aa).

Residues 1–10 are Cytoplasmic-facing; sequence MLRRLLERPC. Residues 11–31 form a helical; Signal-anchor for type II membrane protein membrane-spanning segment; sequence TLALLVGSQLAVMMYLSLGGF. The Lumenal portion of the chain corresponds to 32–395; the sequence is RSLSALFGRD…ANHTAPHGSH (364 aa). Residue N57 is glycosylated (N-linked (GlcNAc...) asparagine). Residues C79 and C121 are joined by a disulfide bond. 132–136 lines the UDP-alpha-D-galactose pocket; that stretch reads PHRAR. N168 carries N-linked (GlcNAc...) asparagine glycosylation. UDP-alpha-D-galactose is bound by residues 171-173, 198-199, Y228, and W260; these read FNR and VD. Residues C192 and C211 are joined by a disulfide bond. A Mn(2+)-binding site is contributed by D199. 262 to 265 is an N-acetyl-D-glucosamine binding site; it reads GEDD. H293 contacts Mn(2+). 293–295 contacts UDP-alpha-D-galactose; that stretch reads HRG. R305 is a binding site for N-acetyl-D-glucosamine. N-linked (GlcNAc...) asparagine glycosylation is found at N339 and N387. The interval 341-395 is disordered; that stretch reads TADIGTDPRGPRAPSGPRYPPGSSQAFRQEMLQRRPPARPGPLPTANHTAPHGSH.

This sequence belongs to the glycosyltransferase 7 family. Mn(2+) is required as a cofactor.

The protein resides in the golgi apparatus. It is found in the golgi stack membrane. The enzyme catalyses an N-acetyl-beta-D-glucosaminyl derivative + UDP-alpha-D-galactose = a beta-D-galactosyl-(1-&gt;4)-N-acetyl-beta-D-glucosaminyl derivative + UDP + H(+). The catalysed reaction is N-acetyl-D-glucosamine + UDP-alpha-D-galactose = beta-D-galactosyl-(1-&gt;4)-N-acetyl-D-glucosamine + UDP + H(+). It carries out the reaction a beta-D-GlcNAc-(1-&gt;3)-beta-D-Gal-(1-&gt;4)-beta-D-Glc-(1&lt;-&gt;1)-Cer(d18:1(4E)) + UDP-alpha-D-galactose = a neolactoside nLc4Cer(d18:1(4E)) + UDP + H(+). It catalyses the reaction a beta-D-glucosylceramide + UDP-alpha-D-galactose = a beta-D-galactosyl-(1-&gt;4)-beta-D-glucosyl-(1&lt;-&gt;1)-ceramide + UDP + H(+). The enzyme catalyses a neolactoside IV(3)-beta-GlcNAc-nLc4Cer + UDP-alpha-D-galactose = a neolactoside nLc6Cer + UDP + H(+). The protein operates within protein modification; protein glycosylation. In terms of biological role, responsible for the synthesis of complex-type N-linked oligosaccharides in many glycoproteins as well as the carbohydrate moieties of glycolipids. The polypeptide is Beta-1,4-galactosyltransferase 3 (Rattus norvegicus (Rat)).